Reading from the N-terminus, the 143-residue chain is MKPLCLVFGLCVLIGCFLSSECQRGFRGQHDPTRPLSPSNPSSHFYPQPDPNRVQISQPDNIPIFMFEQPHSLNICVPPPPLYLGEEFEKLPPNTHIPYILIRPDIEPPSKYIQPVPRKKSNATPAANNFITTATAPNSTDSF.

The signal sequence occupies residues 1-22 (MKPLCLVFGLCVLIGCFLSSEC). 2 disordered regions span residues 28–52 (GQHDPTRPLSPSNPSSHFYPQPDPN) and 116–143 (VPRKKSNATPAANNFITTATAPNSTDSF). Composition is skewed to polar residues over residues 36–45 (LSPSNPSSHF) and 122–143 (NATPAANNFITTATAPNSTDSF).

It localises to the secreted. In terms of biological role, may play a role in protection or detoxification. The polypeptide is Submaxillary gland androgen-regulated protein 2, isoform delta (Smr2) (Mus musculus (Mouse)).